The following is a 363-amino-acid chain: NAD(P)H-quinone oxidoreductase subunit 1, chloroplastic (363 aa).

Transmembrane regions (helical) follow at residues Leu30–Leu50, Phe98–Phe118, Leu127–Met147, Tyr248–Ser268, Val300–Ile320, and Leu336–Thr356.

This sequence belongs to the complex I subunit 1 family. NDH is composed of at least 16 different subunits, 5 of which are encoded in the nucleus.

Its subcellular location is the plastid. It localises to the chloroplast thylakoid membrane. The catalysed reaction is a plastoquinone + NADH + (n+1) H(+)(in) = a plastoquinol + NAD(+) + n H(+)(out). It carries out the reaction a plastoquinone + NADPH + (n+1) H(+)(in) = a plastoquinol + NADP(+) + n H(+)(out). Its function is as follows. NDH shuttles electrons from NAD(P)H:plastoquinone, via FMN and iron-sulfur (Fe-S) centers, to quinones in the photosynthetic chain and possibly in a chloroplast respiratory chain. The immediate electron acceptor for the enzyme in this species is believed to be plastoquinone. Couples the redox reaction to proton translocation, and thus conserves the redox energy in a proton gradient. The polypeptide is NAD(P)H-quinone oxidoreductase subunit 1, chloroplastic (Drimys granadensis).